Here is a 107-residue protein sequence, read N- to C-terminus: Ferredoxin-6 (107 aa).

Positions Ala2–Gln106 constitute a 2Fe-2S ferredoxin-type domain. Cys40, Cys46, Cys49, and Cys87 together coordinate [2Fe-2S] cluster.

This sequence belongs to the adrenodoxin/putidaredoxin family. It depends on [2Fe-2S] cluster as a cofactor.

In terms of biological role, ferredoxins are small electron carrier proteins that participate in various redox reactions. FdVI is an essential protein required for growth of R.capsulatus. May be involved in Fe-S cluster assembly. The protein is Ferredoxin-6 of Rhodobacter capsulatus (Rhodopseudomonas capsulata).